The sequence spans 308 residues: Polyketide transferase claH (308 aa).

Positions 50–280 (SDIAVYFSQQ…RVEVAAGKSH (231 aa)) are abhydrolase domain.

It belongs to the polyketide transferase af380 family.

Its pathway is secondary metabolite biosynthesis. Its function is as follows. Polyketide transferase; part of the cla gene cluster that produces clavatol and ortho-quinone methide. The clavatol biosynthesis cluster cla and the terrestric acid cluster tra are both involved in the production of peniphenones and penilactones. The non-reducing PKS claF is responsible for the formation of clavatol from successive condensations of 3 malonyl-CoA units, presumably with a simple acetyl-CoA starter unit, and 2 methylation steps. The esterase claE probably collaborates with claF by catalyzing the hydrolysis of ACP-bound acyl intermediates to free the ACP from stalled intermediates. The clavatol oxidase claD then converts clavatol to hydroxyclavatol. Spontaneous dehydration of hydroxyclavatol leads to the accumulation of the highly active ortho-quinone methide. On the other hand, the PKS-NRPS hybrid traA is involved in the formation of crustosic acid, with the help of traB and traD. The polyketide synthase module (PKS) of traA is responsible for the synthesis of the polyketide backbone via the condensation of an acetyl-CoA starter unit with 3 malonyl-CoA units. The downstream nonribosomal peptide synthetase (NRPS) module then amidates the carboxyl end of the polyketide with L-malic acid. Because traA lacks a designated enoylreductase (ER) domain, the required activity is provided the enoyl reductase traG. Crustosic acid undergoes decarboxylation and isomerization to the terrestric acid, catalyzed by the 2-oxoglutarate-dependent dioxygenase traH. Both acids are further converted to the 2 gamma-butyrolactones (R)-5-methyltetronic acid and (S)-5-carboxylmethyltetronic acid, with involvement of the cytochrome P450 monooxygenase claJ. Spontaneous addition of the methide to these gamma-butyrolactones leads to peniphenone D and penilactone D, which undergo again stereospecific attacking by methide to give penilactones A and B. The function of the polyketide transferase claH has not been investigated yet. In Penicillium crustosum (Blue mold fungus), this protein is Polyketide transferase claH.